Reading from the N-terminus, the 1330-residue chain is pre-mRNA 3' end processing protein WDR33 (1330 aa).

Alanine 2 carries the N-acetylalanine modification. Serine 7 is modified (phosphoserine). Residue lysine 46 is modified to N6-acetyllysine. 7 WD repeats span residues 117 to 156 (KVKCPVFVVRWTPEGRRLVTGASSGEFTLWNGLTFNFETI), 159 to 198 (AHDSPVRAMTWSHNDMWMLTADHGGYVKYWQSNMNNVKMF), 200 to 239 (AHKEAIREASFSPTDNKFATCSDDGTVRIWDFLRCHEERI), 242 to 283 (GHGA…SLAT), 286 to 325 (AHKNTVMEVKLNLNGNWLLTASRDHLCKLFDIRNLKEELQ), 329 to 369 (GHKK…EVGG), and 373 to 412 (AHEGMIWSLAWHPLGHILCSGSNDHTSKFWTRNRPGDKMR). Glycyl lysine isopeptide (Lys-Gly) (interchain with G-Cter in SUMO2) cross-links involve residues lysine 526, lysine 530, and lysine 560. The interval 566–1330 (QKQADQIQPP…GTSRGSGRGR (765 aa)) is disordered. A compositionally biased stretch (polar residues) spans 588–607 (FSGQGPISQIPQGFQQPHPS). The Collagen-like domain maps to 617–769 (GPPGPQGQFR…GPASQGIQGP (153 aa)). A compositionally biased stretch (low complexity) spans 622–642 (QGQFRAPGPQGQMGPQGPPMH). A compositionally biased stretch (pro residues) spans 682–694 (PHGPLGPQGPPGP). Low complexity-rich tracts occupy residues 695–706 (QGSSGPQGHMGP) and 725–750 (QGHMGPQGPPGTQGMQGPPGPRGMQG). Arginine 776 carries the post-translational modification Omega-N-methylarginine. Residues 848–863 (GPSGSQGQQGPPQGSL) are compositionally biased toward low complexity. Arginine 909 carries the asymmetric dimethylarginine modification. The span at 926–935 (PGLGQQGAQG) shows a compositional bias: low complexity. 2 stretches are compositionally biased toward basic and acidic residues: residues 965 to 983 (SERRHEQSGGPEHGPDRGP) and 992 to 1027 (GPPDRRGSHPDFPDDFRPDDFHPDKRFGHRLREFEG). Arginine 981 carries the post-translational modification Omega-N-methylarginine. Arginine 1028 bears the Omega-N-methylarginine mark. 2 stretches are compositionally biased toward basic and acidic residues: residues 1049 to 1061 (PDHREFNEGDGRG) and 1071 to 1115 (EGRR…RGRD). Acidic residues predominate over residues 1123-1133 (FGPEEGFDASD). 3 stretches are compositionally biased toward basic and acidic residues: residues 1134-1143 (EAARGRDLRG), 1163-1211 (EFPR…RERS), and 1236-1253 (SEHREMEAQGGPSEDRGS). The residue at position 1204 (serine 1204) is a Phosphoserine. Arginine 1256 carries the omega-N-methylarginine modification. The segment covering 1275–1287 (DGDHHDGYHRDEP) has biased composition (basic and acidic residues). Residues 1293-1323 (GSSSSSRGARSGSNWGRGSNMNSGPPRRGTS) are compositionally biased toward low complexity. Arginine 1309 carries the asymmetric dimethylarginine; alternate modification. Residue arginine 1309 is modified to Omega-N-methylarginine; alternate.

It belongs to the WD repeat WDR33 family. Component of the cleavage and polyadenylation specificity factor (CPSF) module of the pre-mRNA 3'-end processing complex. Interacts with CPSF3/CPSF73. As to expression, most highly expressed in testis.

The protein localises to the nucleus. In terms of biological role, essential for both cleavage and polyadenylation of pre-mRNA 3' ends. This chain is pre-mRNA 3' end processing protein WDR33 (Wdr33), found in Mus musculus (Mouse).